We begin with the raw amino-acid sequence, 334 residues long: Malate dehydrogenase, cytoplasmic (334 aa).

Position 2 is an N-acetylserine (S2). NAD(+) contacts are provided by residues 11–17 and D42; that span reads GAAGQIA. The substrate site is built by R92 and R98. N105 serves as a coordination point for NAD(+). Residue K110 is modified to N6-succinyllysine. Q112 provides a ligand contact to NAD(+). N6-acetyllysine is present on residues K118 and K121. NAD(+) is bound at residue 129–131; it reads VGN. Residues N131 and R162 each contribute to the substrate site. H187 functions as the Proton acceptor in the catalytic mechanism. Residue K214 is modified to N6-succinyllysine. S217 bears the Phosphoserine mark. R230 carries the post-translational modification Omega-N-methylarginine. S241 is subject to Phosphoserine. Position 298 is an N6-acetyllysine; alternate (K298). K298 is subject to N6-succinyllysine; alternate. Phosphoserine is present on S309. At K318 the chain carries N6-succinyllysine. Phosphoserine occurs at positions 332 and 333.

The protein belongs to the LDH/MDH superfamily. MDH type 2 family. Homodimer. In terms of processing, ISGylated. Acetylation at Lys-118 dramatically enhances enzymatic activity and promotes adipogenic differentiation.

The protein localises to the cytoplasm. The protein resides in the cytosol. It catalyses the reaction (S)-malate + NAD(+) = oxaloacetate + NADH + H(+). It carries out the reaction (2R)-2-hydroxy-3-(4-hydroxyphenyl)propanoate + NAD(+) = 3-(4-hydroxyphenyl)pyruvate + NADH + H(+). The enzyme catalyses (S)-2-hydroxyglutarate + NAD(+) = 2-oxoglutarate + NADH + H(+). In terms of biological role, catalyzes the reduction of aromatic alpha-keto acids in the presence of NADH. Plays essential roles in the malate-aspartate shuttle and the tricarboxylic acid cycle, important in mitochondrial NADH supply for oxidative phosphorylation. Catalyzes the reduction of 2-oxoglutarate to 2-hydroxyglutarate, leading to elevated reactive oxygen species (ROS). The sequence is that of Malate dehydrogenase, cytoplasmic from Homo sapiens (Human).